The chain runs to 316 residues: MDTIKIFNHGEFDTIRNELVNLLKVVKWNTINSNVTVSSTDTIDISDCIREILYKQFKNVRNIEVSSDISFIKYNRFNDTTLTDDNVGYYLVIYLNRTKSVKTLIYPTPETVITSSEDIMFSKSLNFRFENVKRDYKLVMCSISLTYKPSICRIQYDNNKYLDISDSQECNNICYCVITMDPHHLIDLETICVLVDKSGKCLLVNEFYIRFRKNHIYNSFADLCMDHIFELPNTKELFTLRNDDGRNIAWDNDKLESGNNTWIPKTDDEYKFLSKLMNIAKFNNTKFDYYVLVGDTDPCTVFTFKVTKYYINLNYE.

Belongs to the poxviridae OPG031 protein family.

Its subcellular location is the host cytoplasm. It localises to the host nucleus. In terms of biological role, plays a role in the inhibition of host NF-kappa-B activation. Mechanistically, blocks the subunit p65/RELA translocation into the host nucleus. The sequence is that of Protein C4 (OPG031) from Homo sapiens (Human).